Consider the following 433-residue polypeptide: Serine--tRNA ligase (433 aa).

235–237 contributes to the L-serine binding site; it reads TSE. 266-268 lines the ATP pocket; sequence RSE. E289 contacts L-serine. 353–356 serves as a coordination point for ATP; the sequence is EISS. S388 contacts L-serine.

Belongs to the class-II aminoacyl-tRNA synthetase family. Type-1 seryl-tRNA synthetase subfamily. In terms of assembly, homodimer. The tRNA molecule binds across the dimer.

The protein resides in the cytoplasm. The enzyme catalyses tRNA(Ser) + L-serine + ATP = L-seryl-tRNA(Ser) + AMP + diphosphate + H(+). It carries out the reaction tRNA(Sec) + L-serine + ATP = L-seryl-tRNA(Sec) + AMP + diphosphate + H(+). It participates in aminoacyl-tRNA biosynthesis; selenocysteinyl-tRNA(Sec) biosynthesis; L-seryl-tRNA(Sec) from L-serine and tRNA(Sec): step 1/1. In terms of biological role, catalyzes the attachment of serine to tRNA(Ser). Is also able to aminoacylate tRNA(Sec) with serine, to form the misacylated tRNA L-seryl-tRNA(Sec), which will be further converted into selenocysteinyl-tRNA(Sec). The chain is Serine--tRNA ligase from Burkholderia pseudomallei (strain 1106a).